We begin with the raw amino-acid sequence, 328 residues long: MCTREAVRMSREHDLPEIPSRRLLLKGAAAAGALTAVPGVAHAAPRPAPYENPLVRQRADPHIHRHTDGRYYFTATAPEYDRIVLRRSRTLGGLSTAAESVIWRAHPTGDMAAHIWAPELHRIGGKWYVYFAAAPAEDVWRIRIWVLENSHPDPFKGTWEEKGQVRTAWETFSLDATTFTHRGARYLCWAQHEPGADNNTGLFLSEMANPWTLTGPQIRLSTPEYDWECVGYKVNEGPYALKRNGRIFLTYSASATDHHYCVGMFTADAGGNLMDPGNWSKSPIPVFTGNETTKQYGPGHNCFTVAEDGRSDVLVYHARQYKEIVGDP.

A signal peptide (tat-tyPE signal) is located at residues 1 to 43 (MCTREAVRMSREHDLPEIPSRRLLLKGAAAAGALTAVPGVAHA). The Proton acceptor role is filled by Asp-60. Glu-236 functions as the Proton donor in the catalytic mechanism.

It belongs to the glycosyl hydrolase 43 family. Post-translationally, predicted to be exported by the Tat system. The position of the signal peptide cleavage has been experimentally proven.

It is found in the secreted. It catalyses the reaction Hydrolysis of terminal non-reducing alpha-L-arabinofuranoside residues in alpha-L-arabinosides.. It functions in the pathway glycan metabolism; L-arabinan degradation. Functionally, involved in the degradation of arabinan and is a key enzyme in the complete degradation of the plant cell wall. Catalyzes only the cleavage of terminal alpha-(1-&gt;5) arabinofuranosyl bonds of arabinan present in the arabinofuranosyl polysaccharides or oligosaccharides. It cannot act on other arabinose-containing polysaccharides and arabinoxylo-oligosaccharides. The protein is Extracellular exo-alpha-(1-&gt;5)-L-arabinofuranosidase of Streptomyces chartreusis.